The chain runs to 120 residues: Glycine cleavage system H protein (120 aa).

The region spanning Val-17–Lys-99 is the Lipoyl-binding domain. Lys-58 is modified (N6-lipoyllysine).

It belongs to the GcvH family. As to quaternary structure, the glycine cleavage system is composed of four proteins: P, T, L and H. The cofactor is (R)-lipoate.

The glycine cleavage system catalyzes the degradation of glycine. The H protein shuttles the methylamine group of glycine from the P protein to the T protein. The sequence is that of Glycine cleavage system H protein from Methylorubrum extorquens (strain CM4 / NCIMB 13688) (Methylobacterium extorquens).